Reading from the N-terminus, the 541-residue chain is Zinc finger protein 513 (541 aa).

Residues 1-118 (MPRRKQSHPQ…GEARGERPGP (118 aa)) form a disordered region. Residues 44–57 (LEFEEEEEEEEGDG) show a composition bias toward acidic residues. Phosphoserine is present on residues Ser85 and Ser96. The segment covering 103 to 115 (EPARGPGEARGER) has biased composition (basic and acidic residues). 8 consecutive C2H2-type zinc fingers follow at residues 150-172 (YSCRLCTFVSHYSSHLKRHMQTH), 178-200 (FRCGRCPYASAQLVNLTRHTRTH), 206-228 (YRCPHCPFACSSLGNLRRHQRTH), 360-382 (FACSLCPFATHYPNHLARHMKTH), 388-410 (FRCARCPYASAHLDNLKRHQRVH), 416-438 (YKCPLCPYACGNLANLKRHGRIH), 444-466 (FRCSLCNYSCNQSMNLKRHMLRH), and 472-494 (FRCATCAYTTGHWDNYKRHQKVH). Positions 492–541 (KVHGHGGAGGPGLSASEGWAPPHSPPSVLSSRGPPALGTAGSRAVHTDSS) are disordered.

Belongs to the krueppel C2H2-type zinc-finger protein family. As to quaternary structure, binds DNA. Can associate with the proximal promoter regions of PAX6 and SP4, and their known targets including ARR3, RHO, OPN1MW2 and OPN1SW. As to expression, in the retina, expressed in the outer and inner nuclear layers, and the ganglion cell layer.

The protein localises to the nucleus. In terms of biological role, transcriptional regulator that plays a role in retinal development and maintenance. The sequence is that of Zinc finger protein 513 (ZNF513) from Homo sapiens (Human).